Consider the following 465-residue polypeptide: Spermidine/putrescine import ATP-binding protein PotA (465 aa).

The segment covering 1–18 (MTATSGARTSDARTSGAR) has biased composition (polar residues). Residues 1–21 (MTATSGARTSDARTSGARTSD) form a disordered region. In terms of domain architecture, ABC transporter spans 30–264 (IELVGVAKDY…PRTRFVAGFI (235 aa)). 66–73 (GPSGCGKS) contacts ATP.

Belongs to the ABC transporter superfamily. Spermidine/putrescine importer (TC 3.A.1.11.1) family. As to quaternary structure, the complex is composed of two ATP-binding proteins (PotA), two transmembrane proteins (PotB and PotC) and a solute-binding protein (PotD).

It is found in the cell membrane. The enzyme catalyses ATP + H2O + polyamine-[polyamine-binding protein]Side 1 = ADP + phosphate + polyamineSide 2 + [polyamine-binding protein]Side 1.. Part of the ABC transporter complex PotABCD involved in spermidine/putrescine import. Responsible for energy coupling to the transport system. The polypeptide is Spermidine/putrescine import ATP-binding protein PotA (Frankia alni (strain DSM 45986 / CECT 9034 / ACN14a)).